Reading from the N-terminus, the 554-residue chain is Urocanate hydratase (554 aa).

NAD(+)-binding positions include 52 to 53, Gln130, 176 to 178, Glu196, Arg201, 242 to 243, 263 to 267, 273 to 274, and Tyr322; these read GG, GMG, NA, QTSAH, and YL. Cys410 is a catalytic residue. Residue Gly492 coordinates NAD(+).

The protein belongs to the urocanase family. NAD(+) is required as a cofactor.

It localises to the cytoplasm. It catalyses the reaction 4-imidazolone-5-propanoate = trans-urocanate + H2O. Its pathway is amino-acid degradation; L-histidine degradation into L-glutamate; N-formimidoyl-L-glutamate from L-histidine: step 2/3. Its function is as follows. Catalyzes the conversion of urocanate to 4-imidazolone-5-propionate. This is Urocanate hydratase from Shewanella halifaxensis (strain HAW-EB4).